The chain runs to 215 residues: Ribonuclease HII (215 aa).

The RNase H type-2 domain occupies 19–213 (QTVAGVDEVG…SLRQPSQQID (195 aa)). Residues Asp25, Glu26, and Asp121 each contribute to the a divalent metal cation site.

This sequence belongs to the RNase HII family. The cofactor is Mn(2+). It depends on Mg(2+) as a cofactor.

It localises to the cytoplasm. It catalyses the reaction Endonucleolytic cleavage to 5'-phosphomonoester.. In terms of biological role, endonuclease that specifically degrades the RNA of RNA-DNA hybrids. The protein is Ribonuclease HII of Synechococcus elongatus (strain ATCC 33912 / PCC 7942 / FACHB-805) (Anacystis nidulans R2).